A 111-amino-acid chain; its full sequence is NADH-ubiquinone oxidoreductase chain 3 (111 aa).

A run of 3 helical transmembrane segments spans residues 1–21, 56–76, and 84–104; these read MLVLVMVVLFTLVLLFVFYIG, FFIMMLMFVIFDLEVVMFLGI, and LISFFMLLMFIFGGFYMEWWY.

This sequence belongs to the complex I subunit 3 family.

The protein localises to the mitochondrion membrane. The enzyme catalyses a ubiquinone + NADH + 5 H(+)(in) = a ubiquinol + NAD(+) + 4 H(+)(out). In terms of biological role, core subunit of the mitochondrial membrane respiratory chain NADH dehydrogenase (Complex I) that is believed to belong to the minimal assembly required for catalysis. Complex I functions in the transfer of electrons from NADH to the respiratory chain. The immediate electron acceptor for the enzyme is believed to be ubiquinone. This chain is NADH-ubiquinone oxidoreductase chain 3 (ND3), found in Ascaris suum (Pig roundworm).